The following is a 308-amino-acid chain: Probable acetylxylan esterase A (308 aa).

A signal peptide spans 1 to 19 (MAPFSFLLTLLLYTLSAGA). A glycan (N-linked (GlcNAc...) asparagine) is linked at N141. S151 functions as the Charge relay system in the catalytic mechanism. N-linked (GlcNAc...) asparagine glycosylation is present at N193.

The protein belongs to the carbohydrate esterase 1 (CE1) family. AxeA subfamily. Monomer.

The protein resides in the secreted. It catalyses the reaction Deacetylation of xylans and xylo-oligosaccharides.. Its pathway is glycan degradation; xylan degradation. In terms of biological role, acetylxylan esterase involved in the hydrolysis of xylan, a major structural heterogeneous polysaccharide found in plant biomass representing the second most abundant polysaccharide in the biosphere, after cellulose. Degrades acetylated xylans by cleaving acetyl side groups from the hetero-xylan backbone. The chain is Probable acetylxylan esterase A (axeA) from Aspergillus clavatus (strain ATCC 1007 / CBS 513.65 / DSM 816 / NCTC 3887 / NRRL 1 / QM 1276 / 107).